Consider the following 538-residue polypeptide: Calcium-dependent protein kinase 32 (538 aa).

The interval 1–37 (MGNCCGTAGSLAQNDNKPKKGRKKQNPFSIDYGLHHG) is disordered. G2 carries the N-myristoyl glycine lipid modification. One can recognise a Protein kinase domain in the interval 63–321 (YTLGRELGRG…AQQVLDHPWL (259 aa)). ATP-binding positions include 69-77 (LGRGEFGVT) and K92. Catalysis depends on D187, which acts as the Proton acceptor. S227 bears the Phosphoserine mark. Residues 327 to 357 (APNVSLGETVRARLKQFTVMNKLKKRALRVI) form an autoinhibitory domain region. EF-hand domains follow at residues 364–399 (EEAS…LGHA), 400–435 (IPQD…LRKM), 436–470 (GNDE…DELG), and 471–506 (TSEE…GTDW). Residues D377, S379, K383, E388, D413, D415, D417, Y419, E424, D449, N451, N453, Y455, E460, D484, D486, D488, and R490 each contribute to the Ca(2+) site. Position 492 is a phosphoserine (S492). E495 is a binding site for Ca(2+).

Belongs to the protein kinase superfamily. Ser/Thr protein kinase family. CDPK subfamily. Interacts with ABF4. Interacts with CNGC18. As to expression, expressed in embryos and most of the vegetative tissues.

The protein localises to the nucleus. The protein resides in the membrane. It catalyses the reaction L-seryl-[protein] + ATP = O-phospho-L-seryl-[protein] + ADP + H(+). The enzyme catalyses L-threonyl-[protein] + ATP = O-phospho-L-threonyl-[protein] + ADP + H(+). With respect to regulation, activated by calcium. Autophosphorylation may play an important role in the regulation of the kinase activity. Its function is as follows. May play a role in signal transduction pathways that involve calcium as a second messenger. Involved in maintaining Ca2+ homeostasis in pollen tube tips by regulating CNGC18. Functions as regulator of the calcium-mediated abscisic acid (ABA) signaling pathway. Phosphorylates ABA-responsive transcription factor ABF4 in vitro. The sequence is that of Calcium-dependent protein kinase 32 from Arabidopsis thaliana (Mouse-ear cress).